Here is a 400-residue protein sequence, read N- to C-terminus: Lysophospholipid transporter LplT (400 aa).

A run of 11 helical transmembrane segments spans residues 19 to 39 (VIVA…ATLA), 53 to 73 (VLQM…GQIA), 91 to 111 (AGAA…LVGI), 139 to 159 (LMEA…GVLA), 164 to 184 (IAAL…NLFI), 227 to 247 (LFWG…PVAL), 257 to 277 (YLNA…AKLV), 281 to 301 (TVSR…IFSL), 304 to 324 (ALLP…FFVV), 352 to 372 (NSAM…GVPA), and 373 to 393 (VAIG…LWIW).

The protein belongs to the major facilitator superfamily. LplT (TC 2.A.1.42) family.

Its subcellular location is the cell inner membrane. In terms of biological role, catalyzes the facilitated diffusion of 2-acyl-glycero-3-phosphoethanolamine (2-acyl-GPE) into the cell. This is Lysophospholipid transporter LplT from Salmonella gallinarum (strain 287/91 / NCTC 13346).